Consider the following 148-residue polypeptide: Cytochrome c-type biogenesis protein CcmE (148 aa).

Residues 1–7 (MKPRSKR) are Cytoplasmic-facing. The chain crosses the membrane as a helical; Signal-anchor for type II membrane protein span at residues 8–28 (LLLVAGAVALLVGAVALVLNA). The Periplasmic portion of the chain corresponds to 29-148 (FQQNLVFFHT…AQKAAQTVQQ (120 aa)). Heme contacts are provided by H123 and Y127.

This sequence belongs to the CcmE/CycJ family.

It is found in the cell inner membrane. Heme chaperone required for the biogenesis of c-type cytochromes. Transiently binds heme delivered by CcmC and transfers the heme to apo-cytochromes in a process facilitated by CcmF and CcmH. This Aromatoleum aromaticum (strain DSM 19018 / LMG 30748 / EbN1) (Azoarcus sp. (strain EbN1)) protein is Cytochrome c-type biogenesis protein CcmE.